The following is a 206-amino-acid chain: Erythropoietin (206 aa).

The N-terminal stretch at 1 to 40 (MCEPAPPKPTQSAWHSFPECPALLLLLSLLLLPLGLPVLG) is a signal peptide. 2 disulfide bridges follow: C47-C201 and C69-C73. Residue N64 is glycosylated (N-linked (GlcNAc...) asparagine). N78 and N123 each carry an N-linked (GlcNAc...) asparagine glycan.

It belongs to the EPO/TPO family. Produced by kidney or liver of adult mammals and by liver of fetal or neonatal mammals.

The protein resides in the secreted. In terms of biological role, hormone involved in the regulation of erythrocyte proliferation and differentiation and the maintenance of a physiological level of circulating erythrocyte mass. Binds to EPOR leading to EPOR dimerization and JAK2 activation thereby activating specific downstream effectors, including STAT1 and STAT3. This Canis lupus familiaris (Dog) protein is Erythropoietin (EPO).